We begin with the raw amino-acid sequence, 72 residues long: Translation initiation factor IF-1 (72 aa).

The S1-like domain maps to 1–72; that stretch reads MPKDDSIEVE…TRGRITYRAK (72 aa).

This sequence belongs to the IF-1 family. Component of the 30S ribosomal translation pre-initiation complex which assembles on the 30S ribosome in the order IF-2 and IF-3, IF-1 and N-formylmethionyl-tRNA(fMet); mRNA recruitment can occur at any time during PIC assembly.

It localises to the cytoplasm. Its function is as follows. One of the essential components for the initiation of protein synthesis. Stabilizes the binding of IF-2 and IF-3 on the 30S subunit to which N-formylmethionyl-tRNA(fMet) subsequently binds. Helps modulate mRNA selection, yielding the 30S pre-initiation complex (PIC). Upon addition of the 50S ribosomal subunit IF-1, IF-2 and IF-3 are released leaving the mature 70S translation initiation complex. The protein is Translation initiation factor IF-1 of Myxococcus xanthus (strain DK1622).